The following is a 933-amino-acid chain: Serine/threonine-protein kinase PknD (933 aa).

A Protein kinase domain is found at 4–291 (YDIIRMIGKG…ELKDDIEQHL (288 aa)). Residues 10-18 (IGKGGMGEV) and K33 each bind ATP. D138 serves as the catalytic Proton acceptor.

This sequence belongs to the protein kinase superfamily. Ser/Thr protein kinase family. In terms of processing, autophosphorylated on serine and threonine residues.

It carries out the reaction L-seryl-[protein] + ATP = O-phospho-L-seryl-[protein] + ADP + H(+). The enzyme catalyses L-threonyl-[protein] + ATP = O-phospho-L-threonyl-[protein] + ADP + H(+). Its function is as follows. Together with the serine/threonine kinase Pkn1, may play a role in the specific interactions with host proteins during intracellular growth. The polypeptide is Serine/threonine-protein kinase PknD (Chlamydia felis (strain Fe/C-56) (Chlamydophila felis)).